Consider the following 105-residue polypeptide: uncharacterized protein (105 aa).

Residues 1–48 are Extracellular-facing; that stretch reads MAPKAFFVCLPWVLPRHALIVRQAGNPYHFLAYTNPRAPGKLQDSHCP. A helical membrane pass occupies residues 49-69; sequence VFFMGIIIITIITVTLAIIII. Residue Asn-70 is a topological domain, cytoplasmic. Residues 71–91 traverse the membrane as a helical segment; that stretch reads IIFLTLFDDGMCFYCSLLTFS. At 92–105 the chain is on the extracellular side; sequence FVSFNFDHFDHFDL.

Its subcellular location is the membrane. This is an uncharacterized protein from Saccharomyces cerevisiae (strain ATCC 204508 / S288c) (Baker's yeast).